The sequence spans 222 residues: UPF0758 protein Cpar_0627 (222 aa).

One can recognise an MPN domain in the interval 100 to 222; sequence KIQGAQDVFE…WFSFRDHSLL (123 aa). The Zn(2+) site is built by His-171, His-173, and Asp-184. The JAMM motif signature appears at 171–184; it reads HNHPSGDVQPSNAD.

It belongs to the UPF0758 family.

This chain is UPF0758 protein Cpar_0627, found in Chlorobaculum parvum (strain DSM 263 / NCIMB 8327) (Chlorobium vibrioforme subsp. thiosulfatophilum).